A 426-amino-acid chain; its full sequence is Bone morphogenetic protein 7 (426 aa).

Residues 1–22 (MNALTVKRRLPVLLFLFHISLS) form the signal peptide. Residues 23–282 (SISSNTILEN…TSDIHLRSVR (260 aa)) constitute a propeptide that is removed on maturation. N-linked (GlcNAc...) asparagine glycans are attached at residues N177, N307, and N367. 3 cysteine pairs are disulfide-bonded: C325–C391, C354–C423, and C358–C425.

It belongs to the TGF-beta family. In terms of assembly, homodimer; disulfide-linked. Interacts with twsg1.

It is found in the secreted. Functionally, growth factor of the TGF-beta superfamily that plays important role in various biological processes, including embryogenesis, hematopoiesis, neurogenesis and skeletal morphogenesis. Initiates the canonical BMP signaling cascade by associating with type I receptor ACVR1 and type II receptor ACVR2A. Once all three components are bound together in a complex at the cell surface, ACVR2A phosphorylates and activates ACVR1. In turn, ACVR1 propagates signal by phosphorylating SMAD1/5/8 that travel to the nucleus and act as activators and repressors of transcription of target genes. The polypeptide is Bone morphogenetic protein 7 (bmp7) (Xenopus laevis (African clawed frog)).